Consider the following 345-residue polypeptide: S-adenosylmethionine:tRNA ribosyltransferase-isomerase (345 aa).

Belongs to the QueA family. Monomer.

It localises to the cytoplasm. It catalyses the reaction 7-aminomethyl-7-carbaguanosine(34) in tRNA + S-adenosyl-L-methionine = epoxyqueuosine(34) in tRNA + adenine + L-methionine + 2 H(+). The protein operates within tRNA modification; tRNA-queuosine biosynthesis. Its function is as follows. Transfers and isomerizes the ribose moiety from AdoMet to the 7-aminomethyl group of 7-deazaguanine (preQ1-tRNA) to give epoxyqueuosine (oQ-tRNA). The polypeptide is S-adenosylmethionine:tRNA ribosyltransferase-isomerase (Anaeromyxobacter dehalogenans (strain 2CP-1 / ATCC BAA-258)).